Here is a 73-residue protein sequence, read N- to C-terminus: Eukaryotic translation initiation factor 4 gamma 2 (73 aa).

The 70-residue stretch at 1 to 70 (QVHCYNSNFP…ETAEEEESEE (70 aa)) folds into the W2 domain.

The protein belongs to the eukaryotic initiation factor 4G family. As to quaternary structure, interacts with the serine/threonine protein kinases MKNK1 and MKNK2. Binds EIF4A and EIF3. In terms of processing, phosphorylation; hyperphosphorylated during mitosis.

Appears to play a role in the switch from cap-dependent to IRES-mediated translation during mitosis, apoptosis and viral infection. Cleaved by some caspases and viral proteases. In Gallus gallus (Chicken), this protein is Eukaryotic translation initiation factor 4 gamma 2 (EIF4G2).